Consider the following 354-residue polypeptide: DNA integrity scanning protein DisA (354 aa).

The DAC domain occupies 6 to 144 (DDELKKILKI…GDIKYVLRDS (139 aa)). Residues G73, L91, and 104 to 108 (TRHRT) each bind ATP.

The protein belongs to the DisA family. As to quaternary structure, homooctamer. The cofactor is Mg(2+).

It carries out the reaction 2 ATP = 3',3'-c-di-AMP + 2 diphosphate. Its function is as follows. Participates in a DNA-damage check-point that is active prior to asymmetric division when DNA is damaged. DisA forms globular foci that rapidly scan along the chromosomes during sporulation, searching for lesions. When a lesion is present, DisA pauses at the lesion site. This triggers a cellular response that culminates in a temporary block in sporulation initiation. Functionally, also has diadenylate cyclase activity, catalyzing the condensation of 2 ATP molecules into cyclic di-AMP (c-di-AMP). c-di-AMP acts as a signaling molecule that couples DNA integrity with progression of sporulation. The rise in c-di-AMP level generated by DisA while scanning the chromosome, operates as a positive signal that advances sporulation; upon encountering a lesion, the DisA focus arrests at the damaged site and halts c-di-AMP synthesis. In Clostridium perfringens (strain SM101 / Type A), this protein is DNA integrity scanning protein DisA.